Reading from the N-terminus, the 127-residue chain is Large ribosomal subunit protein bL17 (127 aa).

This sequence belongs to the bacterial ribosomal protein bL17 family. In terms of assembly, part of the 50S ribosomal subunit. Contacts protein L32.

This is Large ribosomal subunit protein bL17 from Xanthomonas campestris pv. campestris (strain 8004).